The following is an 821-amino-acid chain: Condensin-2 complex subunit kle-2 (821 aa).

The tract at residues 389–426 (VMQNDEPNTSRRPDENYAPMDFDDDFGGGGDDDDDDYI) is disordered. The span at 409 to 424 (DFDDDFGGGGDDDDDD) shows a compositional bias: acidic residues. Residues 529-561 (TAILAEKKRRIKEKTAKIREARIQNMQRKRTAR) are a coiled coil.

Belongs to the CND2 H2 (condensin-2 subunit 2) family. As to quaternary structure, component of the condensin II complex, which contains the mix-1/SMC2 and smc-4/SMC4 heterodimer, and three non SMC subunits, capg-2, kle-2 and hcp-6 that probably regulate the complex. Within the complex, interacts with mix-1, smc-4, capg-2 and hcp-6.

It localises to the nucleus. It is found in the chromosome. Its subcellular location is the centromere. Functionally, regulatory subunit of the condensin II complex, a complex that seems to play a role in prophase chromosome condensation and in chromosome segregation in mitosis and in meiosis. The sequence is that of Condensin-2 complex subunit kle-2 (kle-2) from Caenorhabditis elegans.